The sequence spans 648 residues: Leucine aminopeptidase 2 (648 aa).

A peptide is bound by residues 143 to 145 (QCQ) and 269 to 274 (PYGGME). Zn(2+) is bound at residue histidine 298. Glutamate 299 acts as the Proton acceptor in catalysis. Histidine 302 and glutamate 321 together coordinate Zn(2+). The active-site Proton donor is tyrosine 408.

Belongs to the peptidase M1 family. Zn(2+) serves as cofactor.

It is found in the cytoplasm. It localises to the nucleus. It carries out the reaction an epoxide + H2O = an ethanediol. Its function is as follows. Aminopeptidase that preferentially cleaves di- and tripeptides. Also has low epoxide hydrolase activity (in vitro). Can hydrolyze the epoxide leukotriene LTA(4) but it forms preferentially 5,6-dihydroxy-7,9,11,14-eicosatetraenoic acid rather than the cytokine leukotriene B(4) as the product compared to the homologous mammalian enzyme (in vitro). This chain is Leucine aminopeptidase 2, found in Lodderomyces elongisporus (strain ATCC 11503 / CBS 2605 / JCM 1781 / NBRC 1676 / NRRL YB-4239) (Yeast).